The following is a 39-amino-acid chain: Fuctinin-3 (39 aa).

Positions 1-39 (KELNSNHDGADETSEKEQQEAIEHIDEVQNEIDRLNETA) are disordered.

It to human SET/PHAPII protein. In terms of assembly, oligomer.

The protein resides in the cytoplasm. Its function is as follows. Has a role in the physiological regulation of fucosylation processes. The protein is Fuctinin-3 of Rattus norvegicus (Rat).